We begin with the raw amino-acid sequence, 414 residues long: Esterase FrsA (414 aa).

Belongs to the FrsA family.

The enzyme catalyses a carboxylic ester + H2O = an alcohol + a carboxylate + H(+). Catalyzes the hydrolysis of esters. In Shigella sonnei (strain Ss046), this protein is Esterase FrsA.